The following is a 468-amino-acid chain: Eukaryotic translation initiation factor 3 subunit M (468 aa).

The segment at 40–61 (VAPLIEPLRQQEQSEEEPDRKQ) is disordered. Residues 206-377 (DLELAQTHVV…SEFLVHRATY (172 aa)) enclose the PCI domain. The interval 419-468 (QAAAEEVGQGKSGDKGAKGGDRRRNPQQQQQSQPSQPQQAREVELVGGAE) is disordered. Positions 430-442 (SGDKGAKGGDRRR) are enriched in basic and acidic residues. Residues 444–457 (PQQQQQSQPSQPQQ) are compositionally biased toward low complexity.

Belongs to the eIF-3 subunit M family. In terms of assembly, component of the eukaryotic translation initiation factor 3 (eIF-3) complex.

The protein resides in the cytoplasm. Component of the eukaryotic translation initiation factor 3 (eIF-3) complex, which is involved in protein synthesis of a specialized repertoire of mRNAs and, together with other initiation factors, stimulates binding of mRNA and methionyl-tRNAi to the 40S ribosome. The eIF-3 complex specifically targets and initiates translation of a subset of mRNAs involved in cell proliferation. The sequence is that of Eukaryotic translation initiation factor 3 subunit M from Aspergillus fumigatus (strain CBS 144.89 / FGSC A1163 / CEA10) (Neosartorya fumigata).